The chain runs to 283 residues: tRNA pseudouridine synthase B (283 aa).

Catalysis depends on Asp-38, which acts as the Nucleophile.

Belongs to the pseudouridine synthase TruB family. Type 1 subfamily.

It catalyses the reaction uridine(55) in tRNA = pseudouridine(55) in tRNA. Responsible for synthesis of pseudouridine from uracil-55 in the psi GC loop of transfer RNAs. The sequence is that of tRNA pseudouridine synthase B from Onion yellows phytoplasma (strain OY-M).